Here is a 766-residue protein sequence, read N- to C-terminus: MNVNQVAENLALSHQEELVDLPKNYPLSENEDEGDSDGERKHQKLLEAIISLDGKNRRKLAERSEASLKVSEFSVSSEGSGEKLGLADLLEPVKTSSSLATVKKQLNRVKSKKVVELPLNKEKIEQIHREVAFSKTSQVLSKWDPIILKNQQAEQLVFPLGKEQPAIAPIEHALSGWKARTPLEQEIFNLLHKNKQPVTDPLLTPMEKASLQAMSLEEAKMHRAELQRARALQSYYEAKARKEKKIKSKKYHKVVKKGKAKKALKEFEQLQKVNPTVALEEMEKIENARMMERMSLKHQNSGKWAKSKAIMAKYDLEARQAMQEQLAKNKELTQKLQVASESEEEEGGTEVEELLVPHVANEVQMNVDGPNPWMFRSCTSDTKEAATQEDPEQVPELAAHEVSASEAEERPVAEEEILLREFEERQSLRKRSELNQDAEPASSQETKDSSSQEVLSELRALSQKLKEKHQSRKQKASSEGTVPQVQREEPAPEEAEPLLLQRSERVQTLEELEELGKEDCFQNKELPRPVLEGQQSERTPNNRPDAPKEKKEKEQLINLQNFLTTQSPSVRSLAVPTIIEELEDEEERDQRQMIKEAFAGDDVIRDFLKEKREAVEASKPKDVDLTLPGWGEWGGVGLKPSAKKRRQFLIKAPEGPPRKDKNLPNVIISEKRNIHAAAHQVQVLPYPFTHHRQFERTIQTPIGSTWNTQRAFQKLTTPKVVTKPGHIIKPIKAEDVGYQSSSRSDLPVIQRNPKRITTRHNKEEKL.

Residues 14–42 (HQEELVDLPKNYPLSENEDEGDSDGERKH) are disordered. A phosphoserine mark is found at S28, S51, S76, and S80. A Glycyl lysine isopeptide (Lys-Gly) (interchain with G-Cter in SUMO2) cross-link involves residue K121. T204 is modified (phosphothreonine). Coiled coils occupy residues 216–245 (LEEAKMHRAELQRARALQSYYEAKARKEKK) and 316–346 (LEARQAMQEQLAKNKELTQKLQVASESEEEE). A disordered region spans residues 365 to 563 (MNVDGPNPWM…EQLINLQNFL (199 aa)). Low complexity predominate over residues 396–405 (ELAAHEVSAS). A phosphoserine mark is found at S403 and S405. The span at 407 to 434 (AEERPVAEEEILLREFEERQSLRKRSEL) shows a compositional bias: basic and acidic residues. At S443 the chain carries Phosphoserine. K447 is covalently cross-linked (Glycyl lysine isopeptide (Lys-Gly) (interchain with G-Cter in SUMO2)). S451 is modified (phosphoserine). The stretch at 452-470 (QEVLSELRALSQKLKEKHQ) forms a coiled coil. Over residues 466–475 (KEKHQSRKQK) the composition is skewed to basic residues. The span at 502 to 527 (RSERVQTLEELEELGKEDCFQNKELP) shows a compositional bias: basic and acidic residues. K517 is covalently cross-linked (Glycyl lysine isopeptide (Lys-Gly) (interchain with G-Cter in SUMO2)). Over residues 533–542 (GQQSERTPNN) the composition is skewed to polar residues. Residues 545 to 555 (DAPKEKKEKEQ) show a composition bias toward basic and acidic residues. S567 carries the phosphoserine modification. A Glycyl lysine isopeptide (Lys-Gly) (interchain with G-Cter in SUMO2) cross-link involves residue K732. The interval 734-766 (EDVGYQSSSRSDLPVIQRNPKRITTRHNKEEKL) is disordered.

Belongs to the UTP14 family. As to expression, expressed in testis.

It localises to the nucleus. The protein localises to the nucleolus. Its function is as follows. Essential for spermatogenesis. May be required specifically for ribosome biogenesis and hence protein synthesis during male meiosis. In Homo sapiens (Human), this protein is U3 small nucleolar RNA-associated protein 14 homolog C (UTP14C).